The sequence spans 257 residues: DNA-binding and peroxide stress resistance protein YaaA (257 aa).

The short motif at 35 to 66 (IGIARKLSAPQIGKLMSISDKLADLNATRFHD) is the Helix-hairpin-helix element.

The protein belongs to the UPF0246 family.

It localises to the cytoplasm. Its function is as follows. Protects bacteria from neutrophil-related defense upon infection of mammals. Binds DNA. This chain is DNA-binding and peroxide stress resistance protein YaaA, found in Klebsiella pneumoniae subsp. pneumoniae (strain HS11286).